Reading from the N-terminus, the 242-residue chain is Purine nucleoside phosphorylase SCO2081 (242 aa).

The Zn(2+) site is built by His68, Cys106, and His123.

Belongs to the purine nucleoside phosphorylase YfiH/LACC1 family. Homodimer. The cofactor is Cu(2+). Zn(2+) is required as a cofactor.

The catalysed reaction is adenosine + phosphate = alpha-D-ribose 1-phosphate + adenine. It carries out the reaction S-methyl-5'-thioadenosine + phosphate = 5-(methylsulfanyl)-alpha-D-ribose 1-phosphate + adenine. It catalyses the reaction inosine + phosphate = alpha-D-ribose 1-phosphate + hypoxanthine. The enzyme catalyses adenosine + H2O + H(+) = inosine + NH4(+). In terms of biological role, purine nucleoside enzyme that catalyzes the phosphorolysis of adenosine and inosine nucleosides, yielding D-ribose 1-phosphate and the respective free bases, adenine and hypoxanthine. Also catalyzes the phosphorolysis of S-methyl-5'-thioadenosine into adenine and S-methyl-5-thio-alpha-D-ribose 1-phosphate. Also has adenosine deaminase activity. The sequence is that of Purine nucleoside phosphorylase SCO2081 from Streptomyces coelicolor (strain ATCC BAA-471 / A3(2) / M145).